A 121-amino-acid polypeptide reads, in one-letter code: Protein SNORC (121 aa).

The signal sequence occupies residues 1-24; sequence MASCLALRVALLLISGVLAPAVLT. Residues 25–92 lie on the Extracellular side of the membrane; sequence AEGPQEPDPT…QDGGSLGPGA (68 aa). The segment at 26-84 is disordered; sequence EGPQEPDPTLWNEPIELPSGEGPLESTSHNQEFAVSGPPFPTSAPAPEDSTPPARVDQD. Residues 93–113 traverse the membrane as a helical segment; the sequence is IAAIVIAALLATCVVLALVVV. Topologically, residues 114-121 are cytoplasmic; the sequence is ALRKFSAS.

In terms of assembly, interacts (via the extracellular domain) with FGF2. As to expression, expressed only in cartilage, including nasal, knee epiphyseal and rib tissues. In proliferation and hypertrophic chondrocytes, detected intracellulary and in the pericellular extracellular matrix. In primary spongiosa, detected only in the extracellular matrix.

The protein localises to the membrane. It localises to the cytoplasm. It is found in the secreted. Its subcellular location is the extracellular space. The protein resides in the extracellular matrix. Functionally, plays a role in the regulation of chondrocyte maturation and postnatal endochondral ossification. May inhibit cell growth stimulation induced by FGF2. The sequence is that of Protein SNORC from Mus musculus (Mouse).